The chain runs to 291 residues: Tyrosine recombinase XerD (291 aa).

Residues 1–82 enclose the Core-binding (CB) domain; sequence MEEGLIDRLL…ACKRLYIWME (82 aa). One can recognise a Tyr recombinase domain in the interval 103–285; the sequence is NIPTLITEQQ…ANVWLQGVVK (183 aa). Residues Arg-143, Lys-167, His-237, Arg-240, and His-263 contribute to the active site. The active-site O-(3'-phospho-DNA)-tyrosine intermediate is Tyr-272.

This sequence belongs to the 'phage' integrase family. XerD subfamily. As to quaternary structure, forms a cyclic heterotetrameric complex composed of two molecules of XerC and two molecules of XerD.

It localises to the cytoplasm. Functionally, site-specific tyrosine recombinase, which acts by catalyzing the cutting and rejoining of the recombining DNA molecules. The XerC-XerD complex is essential to convert dimers of the bacterial chromosome into monomers to permit their segregation at cell division. It also contributes to the segregational stability of plasmids. This Neisseria meningitidis serogroup B (strain ATCC BAA-335 / MC58) protein is Tyrosine recombinase XerD.